The chain runs to 203 residues: Small ribosomal subunit protein uS4 (203 aa).

The region spanning 93-153 is the S4 RNA-binding domain; that stretch reads QRLDSLVYRL…DKSKNIVPIQ (61 aa).

It belongs to the universal ribosomal protein uS4 family. As to quaternary structure, part of the 30S ribosomal subunit. Contacts protein S5. The interaction surface between S4 and S5 is involved in control of translational fidelity.

One of the primary rRNA binding proteins, it binds directly to 16S rRNA where it nucleates assembly of the body of the 30S subunit. Functionally, with S5 and S12 plays an important role in translational accuracy. The sequence is that of Small ribosomal subunit protein uS4 from Leuconostoc citreum (strain KM20).